We begin with the raw amino-acid sequence, 113 residues long: Large ribosomal subunit protein bL19 (113 aa).

This sequence belongs to the bacterial ribosomal protein bL19 family.

Functionally, this protein is located at the 30S-50S ribosomal subunit interface and may play a role in the structure and function of the aminoacyl-tRNA binding site. This Corynebacterium glutamicum (strain R) protein is Large ribosomal subunit protein bL19.